The chain runs to 323 residues: UPF0200/UPF0201 protein AF_1395 (323 aa).

A UPF0200 region spans residues 1 to 185 (MVLEMKVIAF…EKIRQILLKL (185 aa)). Residue 12 to 19 (GYPLSGKS) participates in ATP binding. The tract at residues 186–323 (AKNVEIEIRT…GRPVKEIDKL (138 aa)) is UPF0201.

It in the N-terminal section; belongs to the UPF0200 family. The protein in the C-terminal section; belongs to the UPF0201 family.

In Archaeoglobus fulgidus (strain ATCC 49558 / DSM 4304 / JCM 9628 / NBRC 100126 / VC-16), this protein is UPF0200/UPF0201 protein AF_1395.